The following is a 495-amino-acid chain: Glycerol kinase (495 aa).

An ADP-binding site is contributed by Thr12. ATP-binding residues include Thr12, Thr13, and Ser14. Thr12 is a sn-glycerol 3-phosphate binding site. An ADP-binding site is contributed by Arg16. The sn-glycerol 3-phosphate site is built by Arg82, Glu83, Tyr134, and Asp243. Glycerol-binding residues include Arg82, Glu83, Tyr134, Asp243, and Gln244. ADP is bound by residues Thr265 and Gly308. Positions 265, 308, 312, and 409 each coordinate ATP. Gly409 and Asn413 together coordinate ADP.

It belongs to the FGGY kinase family.

The catalysed reaction is glycerol + ATP = sn-glycerol 3-phosphate + ADP + H(+). It functions in the pathway polyol metabolism; glycerol degradation via glycerol kinase pathway; sn-glycerol 3-phosphate from glycerol: step 1/1. Its activity is regulated as follows. Inhibited by fructose 1,6-bisphosphate (FBP). In terms of biological role, key enzyme in the regulation of glycerol uptake and metabolism. Catalyzes the phosphorylation of glycerol to yield sn-glycerol 3-phosphate. The polypeptide is Glycerol kinase (Ectopseudomonas mendocina (strain ymp) (Pseudomonas mendocina)).